A 73-amino-acid polypeptide reads, in one-letter code: Protein kish (73 aa).

An N-terminal signal peptide occupies residues 1-21 (MTAIFNFESLLFVILLTICTC). Over 22-52 (TYLHRQFPALLEKRKEGVTMVFWKCARIGER) the chain is Lumenal. A helical transmembrane segment spans residues 53–73 (ASPYISLFCVFMALRFIFGSS).

Belongs to the KISH family.

It localises to the golgi apparatus membrane. The protein resides in the endoplasmic reticulum membrane. In terms of biological role, involved in the early part of the secretory pathway. The polypeptide is Protein kish (ksh1) (Schizosaccharomyces pombe (strain 972 / ATCC 24843) (Fission yeast)).